The sequence spans 297 residues: Adrenocorticotropic hormone receptor (297 aa).

Over Met-1–Arg-23 the chain is Extracellular. Asn-12 and Asn-17 each carry an N-linked (GlcNAc...) asparagine glycan. 2 disulfides stabilise this stretch: Cys-21–Cys-253 and Cys-245–Cys-251. Residues Val-24 to Val-49 traverse the membrane as a helical segment. Residues Phe-50–Pro-58 are Cytoplasmic-facing. A helical transmembrane segment spans residues Met-59–Leu-79. Over Glu-80 to Asp-104 the chain is Extracellular. A helical membrane pass occupies residues Ile-105–Ala-126. At Asp-127–Thr-147 the chain is on the cytoplasmic side. A helical membrane pass occupies residues Val-148 to Phe-168. Residues Ser-169–Ser-180 are Extracellular-facing. A helical transmembrane segment spans residues Leu-181–Leu-199. Residues Ala-200–Gly-217 are Cytoplasmic-facing. The helical transmembrane segment at Ala-218–Phe-244 threads the bilayer. At Cys-245 to Ser-256 the chain is on the extracellular side. Residues Leu-257–Phe-278 form a helical membrane-spanning segment. Residues Arg-279 to Trp-297 lie on the Cytoplasmic side of the membrane. Cys-293 is lipidated: S-palmitoyl cysteine.

The protein belongs to the G-protein coupled receptor 1 family. Homodimer. Interacts with corticotropin (ACTH). Interacts with MRAP; this interaction targets MC2R to the plasma membrane. Interacts with MRAP2; competing with MRAP for binding to MC2R and impairing the binding of corticotropin (ACTH). Ubiquitinated by MGRN1 that may be involved in post-endocytic trafficking and/or degradation of internalized receptor. In terms of tissue distribution, melanocytes and corticoadrenal tissue.

The protein resides in the cell membrane. In terms of biological role, hormone receptor primarily expressed in adrenal cortex that plays a key role in regulating adrenocortical function. Upon corticotropin (ACTH) binding, facilitates the release of adrenal glucocorticoids, including cortisol and corticosterone. In addition, MC2R is required for fetal and neonatal adrenal gland development. Mechanistically, activates adenylate cyclase (cAMP), the MAPK cascade as well as the cAMP-dependent protein kinase A pathway leading to steroidogenic factor 1/NR5A1-mediated transcriptional activation. The chain is Adrenocorticotropic hormone receptor (MC2R) from Homo sapiens (Human).